We begin with the raw amino-acid sequence, 1141 residues long: DNA polymerase II large subunit (1141 aa).

Residues 567–587 (AGTRVGGRMGRPGKSAPRKMK) form a disordered region.

It belongs to the archaeal DNA polymerase II family. As to quaternary structure, heterodimer of a large subunit and a small subunit.

The catalysed reaction is DNA(n) + a 2'-deoxyribonucleoside 5'-triphosphate = DNA(n+1) + diphosphate. It carries out the reaction Exonucleolytic cleavage in the 3'- to 5'-direction to yield nucleoside 5'-phosphates.. In terms of biological role, possesses two activities: a DNA synthesis (polymerase) and an exonucleolytic activity that degrades single-stranded DNA in the 3'- to 5'-direction. Has a template-primer preference which is characteristic of a replicative DNA polymerase. In Methanocorpusculum labreanum (strain ATCC 43576 / DSM 4855 / Z), this protein is DNA polymerase II large subunit.